Reading from the N-terminus, the 341-residue chain is L-threonine 3-dehydrogenase (341 aa).

Cys38 provides a ligand contact to Zn(2+). Catalysis depends on charge relay system residues Thr40 and His43. Residues His63, Glu64, Cys93, Cys96, Cys99, and Cys107 each contribute to the Zn(2+) site. NAD(+) is bound by residues Ile175, Asp195, Arg200, 262-264, and 286-287; these read LGI and IY.

The protein belongs to the zinc-containing alcohol dehydrogenase family. In terms of assembly, homotetramer. Zn(2+) serves as cofactor.

It is found in the cytoplasm. The catalysed reaction is L-threonine + NAD(+) = (2S)-2-amino-3-oxobutanoate + NADH + H(+). Its pathway is amino-acid degradation; L-threonine degradation via oxydo-reductase pathway; glycine from L-threonine: step 1/2. Catalyzes the NAD(+)-dependent oxidation of L-threonine to 2-amino-3-ketobutyrate. This is L-threonine 3-dehydrogenase from Yersinia pestis bv. Antiqua (strain Antiqua).